A 230-amino-acid polypeptide reads, in one-letter code: Demethylmenaquinone methyltransferase (230 aa).

S-adenosyl-L-methionine-binding positions include threonine 62, aspartate 80, 100–101 (DA), and serine 117.

Belongs to the class I-like SAM-binding methyltransferase superfamily. MenG/UbiE family.

The catalysed reaction is a 2-demethylmenaquinol + S-adenosyl-L-methionine = a menaquinol + S-adenosyl-L-homocysteine + H(+). The protein operates within quinol/quinone metabolism; menaquinone biosynthesis; menaquinol from 1,4-dihydroxy-2-naphthoate: step 2/2. In terms of biological role, methyltransferase required for the conversion of demethylmenaquinol (DMKH2) to menaquinol (MKH2). The chain is Demethylmenaquinone methyltransferase from Mycobacterium sp. (strain KMS).